A 228-amino-acid polypeptide reads, in one-letter code: Putative N-acetylmannosamine-6-phosphate 2-epimerase (228 aa).

Belongs to the NanE family.

It carries out the reaction an N-acyl-D-glucosamine 6-phosphate = an N-acyl-D-mannosamine 6-phosphate. Its pathway is amino-sugar metabolism; N-acetylneuraminate degradation; D-fructose 6-phosphate from N-acetylneuraminate: step 3/5. Converts N-acetylmannosamine-6-phosphate (ManNAc-6-P) to N-acetylglucosamine-6-phosphate (GlcNAc-6-P). This is Putative N-acetylmannosamine-6-phosphate 2-epimerase from Thermosynechococcus vestitus (strain NIES-2133 / IAM M-273 / BP-1).